The sequence spans 528 residues: Probable serine/threonine-protein kinase DDB_G0282417 (528 aa).

Residues 49-77 are compositionally biased toward low complexity; sequence NNNNNNNNNNNNNNNNNNNNNNNNNNKNN. Residues 49–84 form a disordered region; sequence NNNNNNNNNNNNNNNNNNNNNNNNNNKNNNDGDDAA. Residues 136–466 enclose the Protein kinase domain; sequence QQNRVLIGEG…ESLINNHQYS (331 aa). ATP is bound by residues 142-150 and K166; that span reads IGEGHYGKV. D266 serves as the catalytic Proton acceptor.

The protein belongs to the protein kinase superfamily. Ser/Thr protein kinase family.

It catalyses the reaction L-seryl-[protein] + ATP = O-phospho-L-seryl-[protein] + ADP + H(+). The catalysed reaction is L-threonyl-[protein] + ATP = O-phospho-L-threonyl-[protein] + ADP + H(+). This is Probable serine/threonine-protein kinase DDB_G0282417 from Dictyostelium discoideum (Social amoeba).